The primary structure comprises 186 residues: ATP synthase subunit delta (186 aa).

Belongs to the ATPase delta chain family. In terms of assembly, F-type ATPases have 2 components, F(1) - the catalytic core - and F(0) - the membrane proton channel. F(1) has five subunits: alpha(3), beta(3), gamma(1), delta(1), epsilon(1). CF(0) has four main subunits: a(1), b(1), b'(1) and c(10-14). The alpha and beta chains form an alternating ring which encloses part of the gamma chain. F(1) is attached to F(0) by a central stalk formed by the gamma and epsilon chains, while a peripheral stalk is formed by the delta, b and b' chains.

It localises to the cell inner membrane. Functionally, f(1)F(0) ATP synthase produces ATP from ADP in the presence of a proton or sodium gradient. F-type ATPases consist of two structural domains, F(1) containing the extramembraneous catalytic core and F(0) containing the membrane proton channel, linked together by a central stalk and a peripheral stalk. During catalysis, ATP synthesis in the catalytic domain of F(1) is coupled via a rotary mechanism of the central stalk subunits to proton translocation. Its function is as follows. This protein is part of the stalk that links CF(0) to CF(1). It either transmits conformational changes from CF(0) to CF(1) or is implicated in proton conduction. This is ATP synthase subunit delta from Cereibacter sphaeroides (strain ATCC 17029 / ATH 2.4.9) (Rhodobacter sphaeroides).